We begin with the raw amino-acid sequence, 529 residues long: Peptide chain release factor 3 (529 aa).

In terms of domain architecture, tr-type G spans 11–280; sequence AKRRTFAIIS…GLVAWAPAPM (270 aa). Residues 20–27, 88–92, and 142–145 each bind GTP; these read SHPDAGKT, DTPGH, and NKLD.

It belongs to the TRAFAC class translation factor GTPase superfamily. Classic translation factor GTPase family. PrfC subfamily.

It localises to the cytoplasm. Its function is as follows. Increases the formation of ribosomal termination complexes and stimulates activities of RF-1 and RF-2. It binds guanine nucleotides and has strong preference for UGA stop codons. It may interact directly with the ribosome. The stimulation of RF-1 and RF-2 is significantly reduced by GTP and GDP, but not by GMP. The polypeptide is Peptide chain release factor 3 (Salmonella agona (strain SL483)).